A 532-amino-acid chain; its full sequence is P granule abnormality protein 2 (532 aa).

In terms of assembly, interacts with pgl-1 and pgl-3; association with either pgl-1 or pgl-3 is not required for P-granule localization. In terms of tissue distribution, highly expressed in the germline.

It is found in the cytoplasmic granule. Functionally, transient component of P-granule which is involved in germline development. This chain is P granule abnormality protein 2, found in Caenorhabditis elegans.